A 377-amino-acid polypeptide reads, in one-letter code: Alanine racemase, catabolic (377 aa).

The Proton acceptor; specific for D-alanine role is filled by K51. Position 51 is an N6-(pyridoxal phosphate)lysine (K51). R150 lines the substrate pocket. Y272 acts as the Proton acceptor; specific for L-alanine in catalysis. M320 lines the substrate pocket.

Belongs to the alanine racemase family. Requires pyridoxal 5'-phosphate as cofactor.

It carries out the reaction L-alanine = D-alanine. Functionally, isomerizes L-alanine to D-alanine which is then oxidized to pyruvate by DadA. The protein is Alanine racemase, catabolic (dadX) of Rhizobium johnstonii (strain DSM 114642 / LMG 32736 / 3841) (Rhizobium leguminosarum bv. viciae).